A 348-amino-acid polypeptide reads, in one-letter code: F(420)H(2) dehydrogenase subunit H (348 aa).

8 helical membrane-spanning segments follow: residues 20-40 (GVVG…AVWL), 93-113 (IFMM…AVFI), 127-147 (ISVL…FMIA), 172-192 (PLGI…IVEI), 198-218 (LLWN…ALMA), 259-279 (ILGS…PAFV), 286-306 (GLIA…MTII), and 328-348 (LLPL…YLGA).

This sequence belongs to the complex I subunit 1 family. The FPO complex is composed of at least 13 different subunits. FpoA, FpoH, FpoJ, FpoK, FpoL, FpoM and FpoN proteins constitute the membrane sector of the complex.

It localises to the cell membrane. It catalyses the reaction methanophenazine + reduced coenzyme F420-(gamma-L-Glu)(n) = dihydromethanophenazine + oxidized coenzyme F420-(gamma-L-Glu)(n) + H(+). Component of the F(420)H(2) dehydrogenase (FPO complex) which is part of the energy-conserving F(420)H(2):heterodisulfide oxidoreductase system. The membrane-bound electron transfer system of the complex plays an important role in the metabolism of methylotrophic methanogens when the organisms grow on methanol or methylamines. Catalyzes the oxidation of methanophenazine to dihydromethanophenazine. It shuttles electrons from F(420)H(2), via FAD and iron-sulfur (Fe-S) centers, to methanophenazine (an electron carrier in the membrane). It couples the redox reaction to proton translocation (for every two electrons transferred, two hydrogen ions are translocated across the cytoplasmic membrane), and thus conserves the redox energy in a proton gradient. The sequence is that of F(420)H(2) dehydrogenase subunit H from Methanosarcina acetivorans (strain ATCC 35395 / DSM 2834 / JCM 12185 / C2A).